A 302-amino-acid polypeptide reads, in one-letter code: Glutaminase (302 aa).

The substrate site is built by Ser-61, Asn-111, Glu-155, Asn-162, Tyr-186, Tyr-238, and Val-256.

It belongs to the glutaminase family. In terms of assembly, homotetramer.

It catalyses the reaction L-glutamine + H2O = L-glutamate + NH4(+). The polypeptide is Glutaminase (Pseudomonas putida (strain ATCC 700007 / DSM 6899 / JCM 31910 / BCRC 17059 / LMG 24140 / F1)).